The chain runs to 419 residues: Dual specificity mitogen-activated protein kinase kinase 7 (419 aa).

Ala2 carries the N-acetylalanine modification. Residues 2–30 adopt a coiled-coil conformation; it reads AASSLEQKLSRLEAKLKQENREARRRIDL. Residues 18–30 show a composition bias toward basic and acidic residues; it reads KQENREARRRIDL. The disordered stretch occupies residues 18 to 77; the sequence is KQENREARRRIDLNLDISPQRPRPTLQLPLANDGGSRSPSSESSPQHPTPPSRPRHMLGL. The segment covering 36-63 has biased composition (low complexity); sequence PQRPRPTLQLPLANDGGSRSPSSESSPQ. Residues 37–57 form a d Domain region; it reads QRPRPTLQLPLANDGGSRSPS. One can recognise a Protein kinase domain in the interval 120 to 380; it reads LENLGEMGSG…YNKLLEHSFI (261 aa). Residues 126–134 and Lys149 contribute to the ATP site; that span reads MGSGTCGQV. Asp243 serves as the catalytic Proton acceptor. Residue Ser271 is modified to Phosphoserine; by MAP3K. Thr275 carries the post-translational modification Phosphothreonine; by MAP3K. Residues 377–400 form a DVD domain region; the sequence is HSFIKHYETLEVDVASWFKDVMAK. Ser411 carries the phosphoserine modification.

This sequence belongs to the protein kinase superfamily. STE Ser/Thr protein kinase family. MAP kinase kinase subfamily. Interacts with VRK2. Interacts (via its D domain) with its substrates MAPK8/JNK1, MAPK9/JNK2 and MAPK10/JNK3. Interacts (via its DVD domain) with MAP3Ks activators like MAP3K5/ASK1 and MAP3K1/MEKK1. Interacts with MAPK8IP1/JIP1, MAPK8IP2/JIP2 and MAPK8IP3/JIP3 scaffold proteins. Interacts with RASSF7, the interaction promotes phosphorylation. Found in a complex with SH3RF1, RAC1, MAP3K11/MLK3, MAPK8IP1/JIP1 and MAPK8/JNK1. Found in a complex with SH3RF1, RAC2, MAP3K7/TAK1, MAPK8IP1/JIP1, MAPK8/JNK1 and MAPK9/JNK2. It depends on Mg(2+) as a cofactor. Activated by phosphorylation on Ser-271 and Thr-275 by MAP kinase kinase kinases (MAP3Ks).

It is found in the nucleus. The protein resides in the cytoplasm. It catalyses the reaction L-seryl-[protein] + ATP = O-phospho-L-seryl-[protein] + ADP + H(+). It carries out the reaction L-threonyl-[protein] + ATP = O-phospho-L-threonyl-[protein] + ADP + H(+). The catalysed reaction is L-tyrosyl-[protein] + ATP = O-phospho-L-tyrosyl-[protein] + ADP + H(+). Activated by phosphorylation by specific MAP kinase kinase kinases such as MAP3K1/MEKK1, MAP3K3/MEKK3, MAP3K11/MLK3 and MAP3K12/DLK. Its function is as follows. Dual specificity protein kinase which acts as an essential component of the MAP kinase signal transduction pathway. Essential component of the stress-activated protein kinase/c-Jun N-terminal kinase (SAP/JNK) signaling pathway. With MAP2K4/MKK4, is the one of the only known kinase to directly activate the stress-activated protein kinase/c-Jun N-terminal kinases MAPK8/JNK1, MAPK9/JNK2 and MAPK10/JNK3. MAP2K4/MKK4 and MAP2K7/MKK7 both activate the JNKs by phosphorylation, but they differ in their preference for the phosphorylation site in the Thr-Pro-Tyr motif. MAP2K4/MKK4 shows preference for phosphorylation of the Tyr residue and MAP2K7/MKK7 for the Thr residue. The monophosphorylation of JNKs on the Thr residue is sufficient to increase JNK activity indicating that MAP2K7/MKK7 is important to trigger JNK activity, while the additional phosphorylation of the Tyr residue by MAP2K4/MKK4 ensures optimal JNK activation. Has a specific role in JNK signal transduction pathway activated by pro-inflammatory cytokines. The MKK/JNK signaling pathway is also involved in mitochondrial death signaling pathway, including the release cytochrome c, leading to apoptosis. Part of a non-canonical MAPK signaling pathway, composed of the upstream MAP3K12 kinase and downstream MAP kinases MAPK1/ERK2 and MAPK3/ERK1, that enhances the AP-1-mediated transcription of APP in response to APOE. The sequence is that of Dual specificity mitogen-activated protein kinase kinase 7 from Rattus norvegicus (Rat).